The sequence spans 156 residues: Cytochrome c-type biogenesis protein CcmE 1 (156 aa).

Over 1-8 (MNATRKQR) the chain is Cytoplasmic. Residues 9 to 29 (LWLVIGVLTAAALAVTLIALA) form a helical; Signal-anchor for type II membrane protein membrane-spanning segment. The Periplasmic portion of the chain corresponds to 30–156 (LQRNMSYLFT…AAAAPLSGVR (127 aa)). Heme is bound by residues His-123 and Tyr-127.

Belongs to the CcmE/CycJ family.

It is found in the cell inner membrane. Its function is as follows. Heme chaperone required for the biogenesis of c-type cytochromes. Transiently binds heme delivered by CcmC and transfers the heme to apo-cytochromes in a process facilitated by CcmF and CcmH. The polypeptide is Cytochrome c-type biogenesis protein CcmE 1 (Xanthomonas campestris pv. campestris (strain 8004)).